Here is a 516-residue protein sequence, read N- to C-terminus: Na(+)/H(+) antiporter NhaB (516 aa).

12 consecutive transmembrane segments (helical) span residues 23 to 43 (LALIIFLIVNPLVFAVAPFVA), 61 to 80 (CYPLLPGGLLAIEALLIGMT), 97 to 117 (LLLMFMVAGIYFMKQLLLFVF), 120 to 140 (LLLGIRSKMLLSLAFCLAAAF), 144 to 164 (FLDALTVVAVVISVAVGFYGI), 202 to 222 (LMMHAGVGTALGGVMTMVGEP), 238 to 258 (FFLRMAPVTLPVMVCGLLTCL), 303 to 323 (ALIGVWLIVALAFHLAEVGLI), 348 to 368 (TEALPFTALLTVFFSIVAVII), 391 to 411 (LFYLFNGLLSSISDNVFVGTV), 447 to 467 (ATPNGQAAFLFLLTSALAPLI), and 475 to 495 (VWMALPYTIVLTLVGLLCVEF).

This sequence belongs to the NhaB Na(+)/H(+) (TC 2.A.34) antiporter family.

The protein resides in the cell inner membrane. It catalyses the reaction 2 Na(+)(in) + 3 H(+)(out) = 2 Na(+)(out) + 3 H(+)(in). Its function is as follows. Na(+)/H(+) antiporter that extrudes sodium in exchange for external protons. The polypeptide is Na(+)/H(+) antiporter NhaB (Klebsiella pneumoniae subsp. pneumoniae (strain ATCC 700721 / MGH 78578)).